A 229-amino-acid polypeptide reads, in one-letter code: Enolase-phosphatase E1 (229 aa).

This sequence belongs to the HAD-like hydrolase superfamily. MasA/MtnC family. As to quaternary structure, monomer. It depends on Mg(2+) as a cofactor.

The catalysed reaction is 5-methylsulfanyl-2,3-dioxopentyl phosphate + H2O = 1,2-dihydroxy-5-(methylsulfanyl)pent-1-en-3-one + phosphate. The protein operates within amino-acid biosynthesis; L-methionine biosynthesis via salvage pathway; L-methionine from S-methyl-5-thio-alpha-D-ribose 1-phosphate: step 3/6. Its pathway is amino-acid biosynthesis; L-methionine biosynthesis via salvage pathway; L-methionine from S-methyl-5-thio-alpha-D-ribose 1-phosphate: step 4/6. Its function is as follows. Bifunctional enzyme that catalyzes the enolization of 2,3-diketo-5-methylthiopentyl-1-phosphate (DK-MTP-1-P) into the intermediate 2-hydroxy-3-keto-5-methylthiopentenyl-1-phosphate (HK-MTPenyl-1-P), which is then dephosphorylated to form the acireductone 1,2-dihydroxy-3-keto-5-methylthiopentene (DHK-MTPene). This chain is Enolase-phosphatase E1, found in Enterobacter sp. (strain 638).